The chain runs to 333 residues: Dihydroorotate dehydrogenase (quinone) (333 aa).

Residues A56–K60 and T80 each bind FMN. K60 serves as a coordination point for substrate. N105–F109 provides a ligand contact to substrate. FMN-binding residues include N133 and N166. Residue N166 coordinates substrate. S169 functions as the Nucleophile in the catalytic mechanism. N171 serves as a coordination point for substrate. Residues K211 and T239 each contribute to the FMN site. N240–T241 contributes to the substrate binding site. Residues G262, G291, and Y312–S313 contribute to the FMN site.

Belongs to the dihydroorotate dehydrogenase family. Type 2 subfamily. In terms of assembly, monomer. The cofactor is FMN.

Its subcellular location is the cell membrane. It carries out the reaction (S)-dihydroorotate + a quinone = orotate + a quinol. It functions in the pathway pyrimidine metabolism; UMP biosynthesis via de novo pathway; orotate from (S)-dihydroorotate (quinone route): step 1/1. Its function is as follows. Catalyzes the conversion of dihydroorotate to orotate with quinone as electron acceptor. This is Dihydroorotate dehydrogenase (quinone) from Legionella pneumophila (strain Lens).